The primary structure comprises 142 residues: Putative pre-16S rRNA nuclease (142 aa).

Belongs to the YqgF nuclease family.

It localises to the cytoplasm. Could be a nuclease involved in processing of the 5'-end of pre-16S rRNA. The protein is Putative pre-16S rRNA nuclease of Chloroflexus aggregans (strain MD-66 / DSM 9485).